A 173-amino-acid polypeptide reads, in one-letter code: Large ribosomal subunit protein uL10 (173 aa).

The protein belongs to the universal ribosomal protein uL10 family. Part of the ribosomal stalk of the 50S ribosomal subunit. The N-terminus interacts with L11 and the large rRNA to form the base of the stalk. The C-terminus forms an elongated spine to which L12 dimers bind in a sequential fashion forming a multimeric L10(L12)X complex.

Functionally, forms part of the ribosomal stalk, playing a central role in the interaction of the ribosome with GTP-bound translation factors. In Christiangramia forsetii (strain DSM 17595 / CGMCC 1.15422 / KT0803) (Gramella forsetii), this protein is Large ribosomal subunit protein uL10.